A 240-amino-acid chain; its full sequence is Glyceraldehyde 3-phosphate phosphatase (240 aa).

The protein belongs to the HAD-like hydrolase superfamily. Requires Mg(2+) as cofactor.

In terms of biological role, catalyzes the dephosphorylation of D,L-glyceraldehyde 3-phosphate in vitro. The polypeptide is Glyceraldehyde 3-phosphate phosphatase (Pyrococcus furiosus (strain ATCC 43587 / DSM 3638 / JCM 8422 / Vc1)).